The primary structure comprises 606 residues: NADH-ubiquinone oxidoreductase chain 5 (606 aa).

16 helical membrane passes run 1–21, 43–63, 87–107, 112–132, 137–157, 171–191, 213–233, 241–261, 273–293, 301–321, 324–344, 366–386, 407–429, 457–477, 482–502, and 582–602; these read MNPFASLTLTTLIILTIPIMM, AFTLSLVPLLMFMHTGQEMII, VMFIPVALFVTWSIMEFSMWY, PFINRFFKYLVLFLITMMILV, LFQLFIGWEGVGIMSFLLIGW, AILYNRIGDIGFVLSMAWFLT, LIGLLLAAAGKSAQFGLHPWL, TPVSALLHSSTMVVAGVFLLI, VQTMTLCLGAITTLFTALCAI, IVAFSTSSQLGLMMVTIGINQ, LAFLHICMHAFFKAMLFMCSG, MPFTTTALIIGSLALTGMPYL, WALLMTLIATSLTAAYSTRIIFF, LLIGSIFAGFIISNNIPPMTV, MPLYMKMTALIVTIMGFMLAL, and GLIKLYFLSFLITIMISMTLF.

Belongs to the complex I subunit 5 family. In terms of assembly, core subunit of respiratory chain NADH dehydrogenase (Complex I) which is composed of 45 different subunits.

Its subcellular location is the mitochondrion inner membrane. It catalyses the reaction a ubiquinone + NADH + 5 H(+)(in) = a ubiquinol + NAD(+) + 4 H(+)(out). Functionally, core subunit of the mitochondrial membrane respiratory chain NADH dehydrogenase (Complex I) which catalyzes electron transfer from NADH through the respiratory chain, using ubiquinone as an electron acceptor. Essential for the catalytic activity and assembly of complex I. In Sus scrofa (Pig), this protein is NADH-ubiquinone oxidoreductase chain 5 (MT-ND5).